The primary structure comprises 880 residues: Alanine--tRNA ligase (880 aa).

Residues histidine 568, histidine 572, cysteine 670, and histidine 674 each contribute to the Zn(2+) site.

It belongs to the class-II aminoacyl-tRNA synthetase family. Requires Zn(2+) as cofactor.

It localises to the cytoplasm. The enzyme catalyses tRNA(Ala) + L-alanine + ATP = L-alanyl-tRNA(Ala) + AMP + diphosphate. Its function is as follows. Catalyzes the attachment of alanine to tRNA(Ala) in a two-step reaction: alanine is first activated by ATP to form Ala-AMP and then transferred to the acceptor end of tRNA(Ala). Also edits incorrectly charged Ser-tRNA(Ala) and Gly-tRNA(Ala) via its editing domain. The polypeptide is Alanine--tRNA ligase (Exiguobacterium sibiricum (strain DSM 17290 / CCUG 55495 / CIP 109462 / JCM 13490 / 255-15)).